A 314-amino-acid chain; its full sequence is MNKTKPPVIVLIGPTAVGKTKLSVMLAERLNAEIISGDSMQIYKRMDIGTAKIREEEMNGVPHHLIDIKEPTESFSVAEYQEIVRQKIAEIDRRGKLPMIVGGTGLYIQSVLYDYSFTEEAGDPEFRAEMEAFSAKRGAEYVHDLLKERDPEAARAIHPNNKRRVIRALEILHTTGKTMSEHMEGQRKELLYTTALIGLTMEREVLYDRINSRVDQMMDEGLLDEVKLLYDENVRNCQSVQAIGYKELYAHLEGRASLEEAVETLKRNSRRYAKRQLTWFRNQMDVAWFDMTPPVNIEQKKQEIFTYIAGKLEL.

13 to 20 contributes to the ATP binding site; sequence GPTAVGKT. A substrate-binding site is contributed by 15–20; the sequence is TAVGKT. Residues 38 to 41 are interaction with substrate tRNA; the sequence is DSMQ.

This sequence belongs to the IPP transferase family. As to quaternary structure, monomer. Requires Mg(2+) as cofactor.

The enzyme catalyses adenosine(37) in tRNA + dimethylallyl diphosphate = N(6)-dimethylallyladenosine(37) in tRNA + diphosphate. Its function is as follows. Catalyzes the transfer of a dimethylallyl group onto the adenine at position 37 in tRNAs that read codons beginning with uridine, leading to the formation of N6-(dimethylallyl)adenosine (i(6)A). This chain is tRNA dimethylallyltransferase, found in Bacillus licheniformis (strain ATCC 14580 / DSM 13 / JCM 2505 / CCUG 7422 / NBRC 12200 / NCIMB 9375 / NCTC 10341 / NRRL NRS-1264 / Gibson 46).